The sequence spans 396 residues: CCA-adding enzyme (396 aa).

2 residues coordinate ATP: Gly27 and Arg30. Gly27 and Arg30 together coordinate CTP. The Mg(2+) site is built by Asp40 and Asp42. ATP-binding residues include Arg111, Asp154, Arg157, Arg160, and Arg163. CTP contacts are provided by Arg111, Asp154, Arg157, Arg160, and Arg163.

This sequence belongs to the tRNA nucleotidyltransferase/poly(A) polymerase family. Bacterial CCA-adding enzyme type 3 subfamily. As to quaternary structure, homodimer. The cofactor is Mg(2+).

It catalyses the reaction a tRNA precursor + 2 CTP + ATP = a tRNA with a 3' CCA end + 3 diphosphate. The catalysed reaction is a tRNA with a 3' CCA end + 2 CTP + ATP = a tRNA with a 3' CCACCA end + 3 diphosphate. Its function is as follows. Catalyzes the addition and repair of the essential 3'-terminal CCA sequence in tRNAs without using a nucleic acid template. Adds these three nucleotides in the order of C, C, and A to the tRNA nucleotide-73, using CTP and ATP as substrates and producing inorganic pyrophosphate. tRNA 3'-terminal CCA addition is required both for tRNA processing and repair. Also involved in tRNA surveillance by mediating tandem CCA addition to generate a CCACCA at the 3' terminus of unstable tRNAs. While stable tRNAs receive only 3'-terminal CCA, unstable tRNAs are marked with CCACCA and rapidly degraded. The chain is CCA-adding enzyme from Bacillus velezensis (strain DSM 23117 / BGSC 10A6 / LMG 26770 / FZB42) (Bacillus amyloliquefaciens subsp. plantarum).